A 277-amino-acid polypeptide reads, in one-letter code: MSFVKMTGSGNDFVFFDGRTTPIDLVTQPEAIKAICNRYNGIGADGLVVLEPLQEEADVRVHYYNSDGTAADLCGNATLCSTAISAQWGITSASGMRLATGAGLINSRIDGLPAIALQPITDIRPDMPIAPATAQGRRVGFAVAGIPHLVILCEDADAVDVAGAGPALRRHEATGPAGANVNWVSPRPDGSWRYRTFERGVEGETLACGTGAVATAVLLRSWGLSDGATTTIRTSSGRDVEVDLEPLTAPDGRSLEGFRPTLRGEGRVVFRGEIAGL.

2 residues coordinate substrate: N11 and N65. Residue C74 is the Proton donor of the active site. Residues 75-76 (GN), N180, and 198-199 (ER) each bind substrate. C208 (proton acceptor) is an active-site residue. A substrate-binding site is contributed by 209 to 210 (GT).

This sequence belongs to the diaminopimelate epimerase family. As to quaternary structure, homodimer.

The protein resides in the cytoplasm. It catalyses the reaction (2S,6S)-2,6-diaminopimelate = meso-2,6-diaminopimelate. The protein operates within amino-acid biosynthesis; L-lysine biosynthesis via DAP pathway; DL-2,6-diaminopimelate from LL-2,6-diaminopimelate: step 1/1. In terms of biological role, catalyzes the stereoinversion of LL-2,6-diaminopimelate (L,L-DAP) to meso-diaminopimelate (meso-DAP), a precursor of L-lysine and an essential component of the bacterial peptidoglycan. This Gemmatimonas aurantiaca (strain DSM 14586 / JCM 11422 / NBRC 100505 / T-27) protein is Diaminopimelate epimerase.